Here is a 346-residue protein sequence, read N- to C-terminus: Biotin synthase (346 aa).

The Radical SAM core domain occupies 41–265 (NEVQISTLLS…MMPHSYVRLS (225 aa)). [4Fe-4S] cluster contacts are provided by C56, C60, and C63. The [2Fe-2S] cluster site is built by C100, C131, C191, and R263.

It belongs to the radical SAM superfamily. Biotin synthase family. Homodimer. [4Fe-4S] cluster is required as a cofactor. Requires [2Fe-2S] cluster as cofactor.

The enzyme catalyses (4R,5S)-dethiobiotin + (sulfur carrier)-SH + 2 reduced [2Fe-2S]-[ferredoxin] + 2 S-adenosyl-L-methionine = (sulfur carrier)-H + biotin + 2 5'-deoxyadenosine + 2 L-methionine + 2 oxidized [2Fe-2S]-[ferredoxin]. It participates in cofactor biosynthesis; biotin biosynthesis; biotin from 7,8-diaminononanoate: step 2/2. Its function is as follows. Catalyzes the conversion of dethiobiotin (DTB) to biotin by the insertion of a sulfur atom into dethiobiotin via a radical-based mechanism. The chain is Biotin synthase from Pseudoalteromonas translucida (strain TAC 125).